Reading from the N-terminus, the 469-residue chain is Threonine synthase (469 aa).

K112 is modified (N6-(pyridoxal phosphate)lysine).

This sequence belongs to the threonine synthase family. Requires pyridoxal 5'-phosphate as cofactor.

The catalysed reaction is O-phospho-L-homoserine + H2O = L-threonine + phosphate. Its pathway is amino-acid biosynthesis; L-threonine biosynthesis; L-threonine from L-aspartate: step 5/5. Its function is as follows. Catalyzes the gamma-elimination of phosphate from L-phosphohomoserine and the beta-addition of water to produce L-threonine. This is Threonine synthase (thrC) from Pseudomonas aeruginosa (strain ATCC 15692 / DSM 22644 / CIP 104116 / JCM 14847 / LMG 12228 / 1C / PRS 101 / PAO1).